A 558-amino-acid chain; its full sequence is Undecaprenyl phosphate-alpha-4-amino-4-deoxy-L-arabinose arabinosyl transferase 1 (558 aa).

The next 12 membrane-spanning stretches (helical) occupy residues Gly-4–Leu-24, Phe-87–Val-107, Leu-115–Val-135, Leu-136–Arg-156, Phe-178–Leu-198, Leu-207–Ala-227, Ala-257–Leu-277, Phe-295–Leu-315, Leu-316–Glu-336, Ala-355–Ala-375, Trp-383–Ser-403, and Trp-411–Gln-431.

Belongs to the glycosyltransferase 83 family.

The protein resides in the cell inner membrane. It catalyses the reaction 4-amino-4-deoxy-alpha-L-arabinopyranosyl di-trans,octa-cis-undecaprenyl phosphate + lipid IVA = lipid IIA + di-trans,octa-cis-undecaprenyl phosphate.. Its pathway is lipopolysaccharide metabolism; 4-amino-4-deoxy-beta-L-arabinose-lipid A biosynthesis. In terms of biological role, catalyzes the transfer of the L-Ara4N moiety of the glycolipid undecaprenyl phosphate-alpha-L-Ara4N to lipid A. The modified arabinose is attached to lipid A and is required for resistance to polymyxin and cationic antimicrobial peptides. The chain is Undecaprenyl phosphate-alpha-4-amino-4-deoxy-L-arabinose arabinosyl transferase 1 from Sodalis glossinidius (strain morsitans).